Consider the following 186-residue polypeptide: MISSNDFRTGTTIELDGAVWRVVEFLHVKPGKGSAFVRTKLKAVQAGNVVEKTFRAGEMVPQALLEKATLQHTYMESGDYVFMDMSTYEETRLTANQIGDSRKYLKEGMEVNVVSWNEKPLEVELPNSVVLEVKETDPGVKGDTATGGTKPAILETGAQIMVPLFISVGEKIKVDTRNDSYLGREN.

The protein belongs to the elongation factor P family.

It is found in the cytoplasm. It participates in protein biosynthesis; polypeptide chain elongation. Its function is as follows. Involved in peptide bond synthesis. Stimulates efficient translation and peptide-bond synthesis on native or reconstituted 70S ribosomes in vitro. Probably functions indirectly by altering the affinity of the ribosome for aminoacyl-tRNA, thus increasing their reactivity as acceptors for peptidyl transferase. In Prochlorococcus marinus (strain SARG / CCMP1375 / SS120), this protein is Elongation factor P.